A 153-amino-acid chain; its full sequence is Ribosome maturation factor RimP (153 aa).

This sequence belongs to the RimP family.

Its subcellular location is the cytoplasm. Its function is as follows. Required for maturation of 30S ribosomal subunits. This Burkholderia mallei (strain NCTC 10229) protein is Ribosome maturation factor RimP.